The primary structure comprises 430 residues: Enolase (430 aa).

Glutamine 164 serves as a coordination point for (2R)-2-phosphoglycerate. Glutamate 206 (proton donor) is an active-site residue. Mg(2+) is bound by residues aspartate 243, glutamate 288, and aspartate 315. (2R)-2-phosphoglycerate is bound by residues lysine 340, arginine 369, serine 370, and lysine 391. Lysine 340 serves as the catalytic Proton acceptor.

The protein belongs to the enolase family. It depends on Mg(2+) as a cofactor.

The protein resides in the cytoplasm. Its subcellular location is the secreted. It localises to the cell surface. It carries out the reaction (2R)-2-phosphoglycerate = phosphoenolpyruvate + H2O. It functions in the pathway carbohydrate degradation; glycolysis; pyruvate from D-glyceraldehyde 3-phosphate: step 4/5. Catalyzes the reversible conversion of 2-phosphoglycerate (2-PG) into phosphoenolpyruvate (PEP). It is essential for the degradation of carbohydrates via glycolysis. The polypeptide is Enolase (Lysinibacillus sphaericus (strain C3-41)).